Consider the following 85-residue polypeptide: RNA-binding protein Hfq (85 aa).

The Sm domain maps to 11 to 71 (DTFLNHVRKS…ISTIMPGHPV (61 aa)).

It belongs to the Hfq family. Homohexamer.

Functionally, RNA chaperone that binds small regulatory RNA (sRNAs) and mRNAs to facilitate mRNA translational regulation in response to envelope stress, environmental stress and changes in metabolite concentrations. Also binds with high specificity to tRNAs. Seems to be involved in the regulation of NifA. The polypeptide is RNA-binding protein Hfq (Azorhizobium caulinodans (strain ATCC 43989 / DSM 5975 / JCM 20966 / LMG 6465 / NBRC 14845 / NCIMB 13405 / ORS 571)).